Here is a 275-residue protein sequence, read N- to C-terminus: Large ribosomal subunit protein uL2c (275 aa).

Disordered regions lie at residues 29–60 (PEKSLTYGRHRSQGRNNRGIITSRHRGGGHKR) and 225–252 (MNPVDHPHGGGEGRAPIGRSKPVTPWGH). A compositionally biased stretch (basic residues) spans 51–60 (SRHRGGGHKR).

It belongs to the universal ribosomal protein uL2 family. As to quaternary structure, part of the 50S ribosomal subunit.

It is found in the plastid. Its subcellular location is the chloroplast. The polypeptide is Large ribosomal subunit protein uL2c (rpl2) (Chlorokybus atmophyticus (Soil alga)).